A 154-amino-acid chain; its full sequence is UPF0178 protein in pahZ1 5'region (154 aa).

It belongs to the UPF0178 family.

In Paucimonas lemoignei (Pseudomonas lemoignei), this protein is UPF0178 protein in pahZ1 5'region.